The chain runs to 371 residues: uncharacterized protein (371 aa).

The ABC transporter domain maps to 20–250 (VTIRNVTKRY…PANIFVAGFI (231 aa)). 52-59 (GPSGCGKS) contacts ATP.

This sequence belongs to the ABC transporter superfamily.

It is found in the cell inner membrane. Probably part of a binding-protein-dependent transport system y4oPQRS. This system probably transports a sugar-like molecule. Probably responsible for energy coupling to the transport system. This is an uncharacterized protein from Sinorhizobium fredii (strain NBRC 101917 / NGR234).